We begin with the raw amino-acid sequence, 212 residues long: Probable nicotinate-nucleotide adenylyltransferase (212 aa).

Belongs to the NadD family.

The enzyme catalyses nicotinate beta-D-ribonucleotide + ATP + H(+) = deamido-NAD(+) + diphosphate. It functions in the pathway cofactor biosynthesis; NAD(+) biosynthesis; deamido-NAD(+) from nicotinate D-ribonucleotide: step 1/1. Its function is as follows. Catalyzes the reversible adenylation of nicotinate mononucleotide (NaMN) to nicotinic acid adenine dinucleotide (NaAD). This Chromobacterium violaceum (strain ATCC 12472 / DSM 30191 / JCM 1249 / CCUG 213 / NBRC 12614 / NCIMB 9131 / NCTC 9757 / MK) protein is Probable nicotinate-nucleotide adenylyltransferase.